The sequence spans 197 residues: Dephospho-CoA kinase (197 aa).

In terms of domain architecture, DPCK spans 3 to 197 (VYGLTGGIGS…QSLLHTHQNT (195 aa)). 11–16 (GSGKTT) is an ATP binding site.

The protein belongs to the CoaE family.

Its subcellular location is the cytoplasm. The catalysed reaction is 3'-dephospho-CoA + ATP = ADP + CoA + H(+). It participates in cofactor biosynthesis; coenzyme A biosynthesis; CoA from (R)-pantothenate: step 5/5. In terms of biological role, catalyzes the phosphorylation of the 3'-hydroxyl group of dephosphocoenzyme A to form coenzyme A. The sequence is that of Dephospho-CoA kinase from Hydrogenovibrio crunogenus (strain DSM 25203 / XCL-2) (Thiomicrospira crunogena).